We begin with the raw amino-acid sequence, 64 residues long: Prokaryotic ubiquitin-like protein Pup (64 aa).

The disordered stretch occupies residues 1-37 (MAQEQTQRAGGGEDDETTGGDGSAGQERREKLAAETD). Positions 21–58 (DGSAGQERREKLAAETDDLLDEIDDVLEENAEDFVRAY) are ARC ATPase binding. A coiled-coil region spans residues 24-52 (AGQERREKLAAETDDLLDEIDDVLEENAE). Glutamine 64 carries the post-translational modification Deamidated glutamine. Glutamine 64 is covalently cross-linked (Isoglutamyl lysine isopeptide (Gln-Lys) (interchain with K-? in acceptor proteins)).

Belongs to the prokaryotic ubiquitin-like protein family. In terms of assembly, strongly interacts with the proteasome-associated ATPase ARC through a hydrophobic interface; the interacting region of Pup lies in its C-terminal half. There is one Pup binding site per ARC hexamer ring. Post-translationally, is modified by deamidation of its C-terminal glutamine to glutamate by the deamidase Dop, a prerequisite to the subsequent pupylation process.

The protein operates within protein degradation; proteasomal Pup-dependent pathway. Functionally, protein modifier that is covalently attached to lysine residues of substrate proteins, thereby targeting them for proteasomal degradation. The tagging system is termed pupylation. The protein is Prokaryotic ubiquitin-like protein Pup of Rhodococcus erythropolis (strain PR4 / NBRC 100887).